Consider the following 606-residue polypeptide: Leucine-rich repeat and immunoglobulin-like domain-containing nogo receptor-interacting protein 2 (606 aa).

The N-terminal stretch at 1–27 is a signal peptide; that stretch reads MLHTAISCWQPFLGLAVVLIFMGSTIG. Residues 28 to 57 enclose the LRRNT domain; it reads CPARCECSAQNKSVSCHRRRLIAIPEGIPI. The Extracellular portion of the chain corresponds to 28–545; that stretch reads CPARCECSAQ…LDLKTILVST (518 aa). Asparagine 38 carries N-linked (GlcNAc...) asparagine glycosylation. 12 LRR repeats span residues 58 to 79, 82 to 103, 106 to 127, 130 to 151, 154 to 175, 178 to 199, 202 to 223, 226 to 247, 250 to 271, 274 to 295, 298 to 319, and 322 to 343; these read ETKILDLSKNRLKSVNPEEFIS, LLEEIDLSDNIIANVEPGAFNN, NLRSLRLKGNRLKLVPLGVFTG, NLTKLDISENKIVILLDYMFQD, NLKSLEVGDNDLVYISHRAFSG, SLEQLTLEKCNLTAVPTEALSH, SLISLHLKHLNINNMPVYAFKR, HLKHLEIDYWPLLDMMPANSLY, NLTSLSVTNTNLSTVPFLAFKH, YLTHLNLSYNPISTIEAGMFSD, RLQELHIVGAQLRTIEPHSFQG, and FLRVLNVSQNLLETLEENVFSS. N-linked (GlcNAc...) asparagine glycosylation occurs at asparagine 130. Residue asparagine 188 is glycosylated (N-linked (GlcNAc...) asparagine). The N-linked (GlcNAc...) asparagine glycan is linked to asparagine 279. Asparagine 327 carries an N-linked (GlcNAc...) asparagine glycan. Positions 355 to 409 constitute an LRRCT domain; sequence NPLACDCRLLWILQRQPTLQFGGQQPMCAGPDTIRERSFKDFHSTALSFYFTCKK. The Ig-like C2-type domain maps to 410-499; that stretch reads PKIREKKLQH…GNDTFTASLT (90 aa). Residues cysteine 432 and cysteine 483 are joined by a disulfide bond. Residues 546–566 traverse the membrane as a helical segment; it reads AMGCFTFLGVVLFCFLLLFVW. At 567–606 the chain is on the cytoplasmic side; it reads SRGKGKHKNSIDLEYVPRKNNGAVVEGEVAGPRRFNMKMI.

Its subcellular location is the membrane. This Homo sapiens (Human) protein is Leucine-rich repeat and immunoglobulin-like domain-containing nogo receptor-interacting protein 2 (LINGO2).